A 221-amino-acid chain; its full sequence is Endo-1,4-beta-xylanase A (221 aa).

A signal peptide spans 1 to 16 (MKFFATIAALVVGAVA). The GH11 domain maps to 29–221 (PMLIERAGPG…GTGSASVTVS (193 aa)). Residue Glu-114 is the Nucleophile of the active site. The Proton donor role is filled by Glu-208.

It belongs to the glycosyl hydrolase 11 (cellulase G) family.

It is found in the secreted. It catalyses the reaction Endohydrolysis of (1-&gt;4)-beta-D-xylosidic linkages in xylans.. It participates in glycan degradation; xylan degradation. Its function is as follows. Endo-1,4-beta-xylanase involved in the hydrolysis of xylan, a major structural heterogeneous polysaccharide found in plant biomass representing the second most abundant polysaccharide in the biosphere, after cellulose. The polypeptide is Endo-1,4-beta-xylanase A (xynA) (Aureobasidium pullulans (Black yeast)).